The sequence spans 378 residues: Myoglobin (378 aa).

Residue His-332 coordinates heme.

Belongs to the indoleamine 2,3-dioxygenase family. Homodimer. It depends on heme as a cofactor.

Serves a reserve supply of oxygen and facilitates the movement of oxygen within muscles. This chain is Myoglobin, found in Haliotis madaka (Giant abalone).